The chain runs to 660 residues: MDSDLDRILPIASRALLCEGNRDWAGAYVSYCKVLEEMKKSSAARDRMGLGPLTGAEACSWNGLYDNCLSKASKLRKTILESEMERQNYQLAAKLSKKAPVDLHPLRPVRSQTPAYTPMTTRMMYRQTRGAQSEVNLSTPKQIYSKHSPPSTSTSSIVSSSYGDAPSYLAPSKPNRSPPLKPEDPFASFNSSASAIAAASKSAAASASALSSDTGRSATMNSTTFPTAMKSQSTTKPTLSNSVSSPSIQVSNNQNANNSTPLSFHAPIPPLHVPAVPLTSASHSSSDGKSRKHPSPYKPYLNSSHDTLGSSTRPSSADTAGSPATSPPATADSKTIVSKTISASTTQQTEPLQQTTPSSDFEYAIMNEIISNHEPVYWSDIAGLDDAKNSLKEAVIYPFLRPELFQGLREPVQGMLLFGPPGTGKTMLARAVATEAKATFFSISASSLTSKYLGDSEKLVRALFEVAKRQTCSVIFVDEIDSILSARNDSGNEHESSRRLKTEFLIQWSSLTNAAPDKQTGHSPRVLVLAATNLPWCIDEAARRRFVKRTYIPLPEKETRYKHLSHLLHNQVHCLTEEDLEELVNLTEGYSGSDITALAKDAAMGPLRNLGDALLTTSAEMIPPISLNHFKASLRTIRPSVSQEGIHRYEEWNKQFGSQR.

Disordered stretches follow at residues 141-186 and 209-334; these read KQIY…EDPF and ALSS…ADSK. The span at 145–161 shows a compositional bias: low complexity; it reads SKHSPPSTSTSSIVSSS. Phosphoserine is present on Ser177. Over residues 213–239 the composition is skewed to polar residues; it reads DTGRSATMNSTTFPTAMKSQSTTKPTL. The segment covering 240 to 255 has biased composition (low complexity); it reads SNSVSSPSIQVSNNQN. Residues 301 to 313 are compositionally biased toward polar residues; it reads LNSSHDTLGSSTR. A compositionally biased stretch (low complexity) spans 314–333; the sequence is PSSADTAGSPATSPPATADS. 419 to 426 is a binding site for ATP; it reads GPPGTGKT.

Belongs to the AAA ATPase family.

It localises to the nucleus. The chain is ATPase-like fidgetin (alf1) from Schizosaccharomyces pombe (strain 972 / ATCC 24843) (Fission yeast).